A 300-amino-acid polypeptide reads, in one-letter code: GTPase Era (300 aa).

The region spanning 6–173 (KSGFLSIIGR…VDVLKEHLPE (168 aa)) is the Era-type G domain. A G1 region spans residues 14–21 (GRPNVGKS). A GTP-binding site is contributed by 14 to 21 (GRPNVGKS). The interval 40 to 44 (QTTRN) is G2. The segment at 61–64 (DTPG) is G3. GTP-binding positions include 61 to 65 (DTPGI) and 123 to 126 (NKID). Residues 123–126 (NKID) form a G4 region. Residues 152–154 (ISA) are G5. The 78-residue stretch at 204 to 281 (TKEEVPHSIA…YLELWIKVKK (78 aa)) folds into the KH type-2 domain.

This sequence belongs to the TRAFAC class TrmE-Era-EngA-EngB-Septin-like GTPase superfamily. Era GTPase family. In terms of assembly, monomer.

Its subcellular location is the cytoplasm. The protein resides in the cell membrane. In terms of biological role, an essential GTPase that binds both GDP and GTP, with rapid nucleotide exchange. Plays a role in 16S rRNA processing and 30S ribosomal subunit biogenesis and possibly also in cell cycle regulation and energy metabolism. This chain is GTPase Era, found in Oceanobacillus iheyensis (strain DSM 14371 / CIP 107618 / JCM 11309 / KCTC 3954 / HTE831).